A 222-amino-acid chain; its full sequence is E3 ubiquitin-protein ligase RNF138 (222 aa).

The RING-type zinc-finger motif lies at 17-57; the sequence is CPVCQEILQTPVRTQTCRHVFCRKCFMLAMKSGGAYCPLCR. Zn(2+) contacts are provided by Cys85, Cys88, His100, and Cys104. The C2HC RNF-type zinc finger occupies 85–104; that stretch reads CMYCGKMMKLHYMKLHYKSC. 2 consecutive C2H2-type zinc fingers follow at residues 134–157 and 164–192; these read YKCP…NNVH and MVCP…NARH. The region spanning 202–220 is the UIM domain; the sequence is INIDEEAQFQIAVANSYKI.

Interacts with nlk.2 (via C-terminus) and ube2k. Post-translationally, auto-ubiquitinated.

It localises to the chromosome. The catalysed reaction is S-ubiquitinyl-[E2 ubiquitin-conjugating enzyme]-L-cysteine + [acceptor protein]-L-lysine = [E2 ubiquitin-conjugating enzyme]-L-cysteine + N(6)-ubiquitinyl-[acceptor protein]-L-lysine.. The protein operates within protein modification; protein ubiquitination. Its function is as follows. E3 ubiquitin-protein ligase involved in DNA damage response by promoting DNA resection and homologous recombination. Recruited to sites of double-strand breaks following DNA damage and specifically promotes double-strand break repair via homologous recombination. Together with nlk.2, involved in the ubiquitination and degradation of TCF/LEF. Also exhibits auto-ubiquitination activity in combination with ube2k. May act as a negative regulator in the Wnt/beta-catenin-mediated signaling pathway. This Xenopus laevis (African clawed frog) protein is E3 ubiquitin-protein ligase RNF138 (rnf138).